The sequence spans 303 residues: Glycine--tRNA ligase alpha subunit (303 aa).

Belongs to the class-II aminoacyl-tRNA synthetase family. Tetramer of two alpha and two beta subunits.

Its subcellular location is the cytoplasm. It catalyses the reaction tRNA(Gly) + glycine + ATP = glycyl-tRNA(Gly) + AMP + diphosphate. The sequence is that of Glycine--tRNA ligase alpha subunit from Stenotrophomonas maltophilia (strain K279a).